Reading from the N-terminus, the 386-residue chain is Patatin-T5 (386 aa).

Residues 1-23 form the signal peptide; sequence MATTNSFTILIFMILATTSSTFA. A PNPLA domain is found at 32 to 229; sequence LSIDGGGIKG…TVDDPALLSI (198 aa). A GXGXXG motif is present at residues 36 to 41; sequence GGGIKG. A glycan (N-linked (GlcNAc...) asparagine) is linked at Asn60. Residues 75–79 carry the GXSXG motif; the sequence is GTSTG. Ser77 acts as the Nucleophile in catalysis. Asn90 and Asn202 each carry an N-linked (GlcNAc...) asparagine glycan. The Proton acceptor role is filled by Asp215. Residues 215–217 carry the DGA/G motif; sequence DGA.

It belongs to the patatin family. N-glycosylated. In terms of tissue distribution, tuber and stolon.

Its subcellular location is the vacuole. Functionally, probable lipolytic acyl hydrolase (LAH), an activity which is thought to be involved in the response of tubers to pathogens. This Solanum tuberosum (Potato) protein is Patatin-T5.